Here is a 260-residue protein sequence, read N- to C-terminus: MGYLKRFALYISILVLIVMVAGCGKSDETKEDSKEEQIKKSFAKTLDMYPIKNLQDLYDKEGYRDGEFKKGDKGTWTLLTSFAKSNKPGEIDDEGMVLFLNRNTKKATGYYYISKVHDEFNEKEHQKNIMLNLKIIKIVLLDNVEDEKLKQKIENFKFLSQYADFKDLKNYQDGSITTNENVPSYEAEFKLNNSDENVKKLREVYPITTKKSPVLKLHIDGDIKGSSIGYKNIEFNFSKVKDEETAVRDFVNFGPSDENS.

The first 22 residues, 1 to 22, serve as a signal peptide directing secretion; it reads MGYLKRFALYISILVLIVMVAG. A lipid anchor (N-palmitoyl cysteine) is attached at C23. C23 carries the S-diacylglycerol cysteine lipid modification.

Belongs to the staphylococcal tandem lipoprotein family.

Its subcellular location is the cell membrane. This is an uncharacterized protein from Staphylococcus aureus (strain bovine RF122 / ET3-1).